We begin with the raw amino-acid sequence, 151 residues long: MPLLATGKKFIRTIEQSGAVGIYVPSEGGFEGRYKRRLRATGYLTLFVSAPGMGDLASYFTDVHGVRPPHLGKNQIRTYFLPPFVTYQLENLPPQAKGLALWLYDGKRLAKQELAYLSAITASEPRLKVVVELGGARSFEWQPLSDIVAAA.

This sequence belongs to the complex I NdhN subunit family. In terms of assembly, NDH-1 can be composed of about 15 different subunits; different subcomplexes with different compositions have been identified which probably have different functions.

The protein localises to the cellular thylakoid membrane. It carries out the reaction a plastoquinone + NADH + (n+1) H(+)(in) = a plastoquinol + NAD(+) + n H(+)(out). It catalyses the reaction a plastoquinone + NADPH + (n+1) H(+)(in) = a plastoquinol + NADP(+) + n H(+)(out). Its function is as follows. NDH-1 shuttles electrons from an unknown electron donor, via FMN and iron-sulfur (Fe-S) centers, to quinones in the respiratory and/or the photosynthetic chain. The immediate electron acceptor for the enzyme in this species is believed to be plastoquinone. Couples the redox reaction to proton translocation, and thus conserves the redox energy in a proton gradient. Cyanobacterial NDH-1 also plays a role in inorganic carbon-concentration. In Acaryochloris marina (strain MBIC 11017), this protein is NAD(P)H-quinone oxidoreductase subunit N.